We begin with the raw amino-acid sequence, 133 residues long: Protein NrdI (133 aa).

Belongs to the NrdI family.

Probably involved in ribonucleotide reductase function. This chain is Protein NrdI, found in Escherichia coli O17:K52:H18 (strain UMN026 / ExPEC).